A 385-amino-acid chain; its full sequence is cAMP-dependent protein kinase, catalytic subunit-like (385 aa).

Residues 63–317 form the Protein kinase domain; sequence LERIVTIGKG…TQDVKDHKWF (255 aa). ATP-binding positions include 69–77 and Lys92; that span reads IGKGTFGRV. Catalysis depends on Asp186, which acts as the Proton acceptor. Residues 318–385 enclose the AGC-kinase C-terminal domain; the sequence is EKVNWDDTLH…QRERDLFAEW (68 aa).

It belongs to the protein kinase superfamily. Ser/Thr protein kinase family. cAMP subfamily.

The catalysed reaction is L-seryl-[protein] + ATP = O-phospho-L-seryl-[protein] + ADP + H(+). It carries out the reaction L-threonyl-[protein] + ATP = O-phospho-L-threonyl-[protein] + ADP + H(+). The polypeptide is cAMP-dependent protein kinase, catalytic subunit-like (Caenorhabditis briggsae).